The sequence spans 236 residues: Cell division protein FtsQ (236 aa).

Topologically, residues 1-14 (MWDNHQALNQVADW) are cytoplasmic. The helical transmembrane segment at 15-37 (LFTLAGLTTIYLMVQWTIHLPLL) threads the bilayer. Residues 37-111 (LPLKEVHIRS…NGLDVVVEEH (75 aa)) enclose the POTRA domain. Residues 38 to 236 (PLKEVHIRSN…VSGFAARGTR (199 aa)) are Periplasmic-facing.

Belongs to the FtsQ/DivIB family. FtsQ subfamily. Part of a complex composed of FtsB, FtsL and FtsQ.

It localises to the cell inner membrane. Functionally, essential cell division protein. May link together the upstream cell division proteins, which are predominantly cytoplasmic, with the downstream cell division proteins, which are predominantly periplasmic. May control correct divisome assembly. The sequence is that of Cell division protein FtsQ from Nitrosospira multiformis (strain ATCC 25196 / NCIMB 11849 / C 71).